The sequence spans 223 residues: uncharacterized protein (223 aa).

This sequence to M.jannaschii MJ1453.

This is an uncharacterized protein from Methanothermobacter thermautotrophicus (strain ATCC 29096 / DSM 1053 / JCM 10044 / NBRC 100330 / Delta H) (Methanobacterium thermoautotrophicum).